Reading from the N-terminus, the 24-residue chain is Waglerin-3 (24 aa).

Residues 1–10 (SLGGKPDLRP) are compositionally biased toward basic and acidic residues. Positions 1–24 (SLGGKPDLRPCHPPCHYIPRPKPR) are disordered. An intrachain disulfide couples C11 to C15.

The protein belongs to the waglerin family. Waglerin-1 is monomeric. Post-translationally, amidation of the waglerin-1 C-terminus increases the affinity by 2-fold. As to expression, expressed by the venom gland.

Its subcellular location is the secreted. Waglerin-1 selectively blocks the epsilon subunit of muscle nicotinic acetylcholine receptor (nAChR). Also has effects on rodent ionotropic GABA(A) receptors (GABR), since it potentiates I(GABA) in some neurons and depresses I(GABA) in others. In mice, it elicits tachypnea, ocular proptosis, rapid collapse and spasms, whereas no toxic effects on respiration and blood pressure are observed in rats. Functionally, waglerin-3 selectively blocks the epsilon subunit of muscle nicotinic acetylcholine receptor (nAChR). It elicits tachypnea, ocular proptosis, rapid collapse and spasms in mice. It causes death by respiratory failure. In Tropidolaemus wagleri (Wagler's pit viper), this protein is Waglerin-3.